The primary structure comprises 477 residues: Glycogen synthase (477 aa).

An ADP-alpha-D-glucose-binding site is contributed by Lys15.

It belongs to the glycosyltransferase 1 family. Bacterial/plant glycogen synthase subfamily.

It catalyses the reaction [(1-&gt;4)-alpha-D-glucosyl](n) + ADP-alpha-D-glucose = [(1-&gt;4)-alpha-D-glucosyl](n+1) + ADP + H(+). Its pathway is glycan biosynthesis; glycogen biosynthesis. Synthesizes alpha-1,4-glucan chains using ADP-glucose. The polypeptide is Glycogen synthase (Escherichia coli O139:H28 (strain E24377A / ETEC)).